The chain runs to 370 residues: Aminomethyltransferase (370 aa).

The protein belongs to the GcvT family. In terms of assembly, the glycine cleavage system is composed of four proteins: P, T, L and H.

The catalysed reaction is N(6)-[(R)-S(8)-aminomethyldihydrolipoyl]-L-lysyl-[protein] + (6S)-5,6,7,8-tetrahydrofolate = N(6)-[(R)-dihydrolipoyl]-L-lysyl-[protein] + (6R)-5,10-methylene-5,6,7,8-tetrahydrofolate + NH4(+). The glycine cleavage system catalyzes the degradation of glycine. The polypeptide is Aminomethyltransferase (Stenotrophomonas maltophilia (strain K279a)).